A 169-amino-acid chain; its full sequence is Transcription antitermination protein NusB (169 aa).

Over residues 1 to 19 (MAEMKKTIDNKPAPKGEKK) the composition is skewed to basic and acidic residues. The interval 1–22 (MAEMKKTIDNKPAPKGEKKANR) is disordered.

This sequence belongs to the NusB family.

Functionally, involved in transcription antitermination. Required for transcription of ribosomal RNA (rRNA) genes. Binds specifically to the boxA antiterminator sequence of the ribosomal RNA (rrn) operons. In Rhodopseudomonas palustris (strain BisB18), this protein is Transcription antitermination protein NusB.